An 804-amino-acid polypeptide reads, in one-letter code: Protein SEY1 homolog 1 (804 aa).

Over 1 to 638 the chain is Cytoplasmic; that stretch reads MEQIITGEGQ…SVLASQNNEH (638 aa). Residues 28-245 form the GB1/RHD3-type G domain; it reads GTDYHMVSII…EENYLFKEKS (218 aa). GTP is bound at residue 38–45; the sequence is GCQSSGKS. A helical transmembrane segment spans residues 639-659; the sequence is IPPWAWFLFLFSCSDYILWWL. Residues 660 to 662 lie on the Lumenal side of the membrane; sequence SNP. The helical transmembrane segment at 663–683 threads the bilayer; the sequence is LLFSLTVLFGGTYLVLNQLGL. Over 684-804 the chain is Cytoplasmic; sequence WDTAVQKLLD…RKRVRVGTLV (121 aa). Residues 706–804 are disordered; that stretch reads PDENNETETN…RKRVRVGTLV (99 aa). The segment covering 751-791 has biased composition (polar residues); the sequence is QGLTKTESNVTFANVSNANDEQSLTKNNTEDSLNTGSSSSG. Residues 792 to 804 show a composition bias toward basic residues; it reads QRHRKRVRVGTLV.

This sequence belongs to the TRAFAC class dynamin-like GTPase superfamily. GB1/RHD3 GTPase family. RHD3 subfamily.

It is found in the endoplasmic reticulum membrane. Its function is as follows. Probable GTP-binding protein that may be involved in cell development. This is Protein SEY1 homolog 1 from Trichomonas vaginalis (strain ATCC PRA-98 / G3).